A 424-amino-acid chain; its full sequence is tRNA modification GTPase MnmE (424 aa).

(6S)-5-formyl-5,6,7,8-tetrahydrofolate contacts are provided by R20, E77, and R117. Positions 212–351 (GVRVVFAGPP…LVRDLRDAAR (140 aa)) constitute a TrmE-type G domain. Residue N222 participates in K(+) binding. Residues 222–227 (NAGKST), 241–247 (SPIAGTT), and 266–269 (DTAG) contribute to the GTP site. A Mg(2+)-binding site is contributed by S226. K(+)-binding residues include S241, I243, and T246. A Mg(2+)-binding site is contributed by T247. Position 424 (K424) interacts with (6S)-5-formyl-5,6,7,8-tetrahydrofolate.

It belongs to the TRAFAC class TrmE-Era-EngA-EngB-Septin-like GTPase superfamily. TrmE GTPase family. Homodimer. Heterotetramer of two MnmE and two MnmG subunits. The cofactor is K(+).

The protein localises to the cytoplasm. In terms of biological role, exhibits a very high intrinsic GTPase hydrolysis rate. Involved in the addition of a carboxymethylaminomethyl (cmnm) group at the wobble position (U34) of certain tRNAs, forming tRNA-cmnm(5)s(2)U34. The polypeptide is tRNA modification GTPase MnmE (Erythrobacter litoralis (strain HTCC2594)).